A 349-amino-acid polypeptide reads, in one-letter code: Ferredoxin--NADP reductase 1 (349 aa).

The FAD site is built by Glu36, Lys44, Tyr48, Val88, Leu123, Asp290, and Ser331.

Belongs to the ferredoxin--NADP reductase type 2 family. In terms of assembly, homodimer. The cofactor is FAD.

It catalyses the reaction 2 reduced [2Fe-2S]-[ferredoxin] + NADP(+) + H(+) = 2 oxidized [2Fe-2S]-[ferredoxin] + NADPH. In Lysinibacillus sphaericus (strain C3-41), this protein is Ferredoxin--NADP reductase 1.